Here is a 348-residue protein sequence, read N- to C-terminus: tRNA pseudouridine synthase D (348 aa).

Residue aspartate 81 is the Nucleophile of the active site. Residues 158–304 (GVPNYFGAQR…MRHERRSIEL (147 aa)) form the TRUD domain.

It belongs to the pseudouridine synthase TruD family.

The enzyme catalyses uridine(13) in tRNA = pseudouridine(13) in tRNA. In terms of biological role, responsible for synthesis of pseudouridine from uracil-13 in transfer RNAs. In Aliivibrio salmonicida (strain LFI1238) (Vibrio salmonicida (strain LFI1238)), this protein is tRNA pseudouridine synthase D.